The following is a 770-amino-acid chain: MAYGWWRRRRRRWRRWRRRPWRRRWRTRRRRPARRRGRRRNVRRRRRGGRWRRRYRRWKRKGRRRKKAKIIIRQWQPNYRRRCNIVGYIPVLICGENTVSRNYATHSDDTNYPGPFGGGMTTDKFTLRILYGEYKRFMNYWTASNEDLDLCRYLGVNLYFFRHPDVDFIIKINTMPPFLDTELTAPSIHPGMLALDKRARWIPSLKSRPGKKHYIKIRVGAPKMFTDKWYPQTDLCDMVLLTVYATAADMQYPFGSPLTDSVVVNFQVLQSMYDEKISILPDEKIQRQNLLTSISNYIPFYNTTQTIAQLKPFVDAGNAISGTTTTTWGSLLNTTKFTTTTTTTYTYPGTTNTTVTFITANDSWYRGTVYNQNIKDVAKKAAELYSKATKAVLGNTFTTEDYTLGYHGGLYSSIWLSPGRSYFETPGAYTDIKYNPFTDRGEGNMLWIDWLSKKNMNYDKVQSKCLISDLPLWAAAYGYVEFCAKSTGDQNIHMNARLLIRSPFTDPQLLVHTDPTKGFVPYSLNFGNGKMPGGSSNVPIRMRAKWYPTLLHQQEVLEALAQSGPFAYHADIKKVSLGMKYRFKWIWGGNPVRQQVVRNPCKETHSSGNRVPRSLQIVDPKYNSPELTFHTWDFKRGLFGPKAIQRMQQQPTTTDIFSAGRKRPRRDTEVYHSSQEGEQKESLLFPPVKLLRRVPPWEDSQQEESGSQSSEEETQTVSQQLKQQLQQQRILGVKLRLLFNQVQKIQQNQDINPTLLPRGGDLASLFQIAP.

Disordered regions lie at residues 645 to 682 and 697 to 717; these read QRMQ…QKES and WEDS…TQTV. A compositionally biased stretch (polar residues) spans 646 to 656; it reads RMQQQPTTTDI. Positions 666–681 are enriched in basic and acidic residues; the sequence is RDTEVYHSSQEGEQKE. Low complexity predominate over residues 703 to 717; the sequence is EESGSQSSEEETQTV.

Belongs to the anelloviridae capsid protein family.

The protein localises to the virion. Its function is as follows. May self assemble to form an icosahedral capsid. Presumably essential to initiate and monitor viral genome replication by a rolling circle mechanism. In Homo sapiens (Human), this protein is Probable capsid and replication-associated protein.